The chain runs to 149 residues: Large ribosomal subunit protein uL13 (149 aa).

The protein belongs to the universal ribosomal protein uL13 family. As to quaternary structure, part of the 50S ribosomal subunit.

In terms of biological role, this protein is one of the early assembly proteins of the 50S ribosomal subunit, although it is not seen to bind rRNA by itself. It is important during the early stages of 50S assembly. The sequence is that of Large ribosomal subunit protein uL13 from Thermotoga maritima (strain ATCC 43589 / DSM 3109 / JCM 10099 / NBRC 100826 / MSB8).